The following is a 210-amino-acid chain: FMN-dependent NADH:quinone oxidoreductase (210 aa).

Residues Ser-10 and 16 to 18 (SRS) each bind FMN.

It belongs to the azoreductase type 1 family. In terms of assembly, homodimer. Requires FMN as cofactor.

The enzyme catalyses 2 a quinone + NADH + H(+) = 2 a 1,4-benzosemiquinone + NAD(+). The catalysed reaction is N,N-dimethyl-1,4-phenylenediamine + anthranilate + 2 NAD(+) = 2-(4-dimethylaminophenyl)diazenylbenzoate + 2 NADH + 2 H(+). Quinone reductase that provides resistance to thiol-specific stress caused by electrophilic quinones. In terms of biological role, also exhibits azoreductase activity. Catalyzes the reductive cleavage of the azo bond in aromatic azo compounds to the corresponding amines. The polypeptide is FMN-dependent NADH:quinone oxidoreductase (Kineococcus radiotolerans (strain ATCC BAA-149 / DSM 14245 / SRS30216)).